A 363-amino-acid polypeptide reads, in one-letter code: GDSL esterase/lipase At2g24560 (363 aa).

The first 22 residues, 1-22 (MSTSKTITFTLFIAALLSSCDA), serve as a signal peptide directing secretion. N25 carries an N-linked (GlcNAc...) asparagine glycan. Residue S41 is the Nucleophile of the active site. 2 N-linked (GlcNAc...) asparagine glycosylation sites follow: N103 and N325. Active-site residues include D333 and H336.

This sequence belongs to the 'GDSL' lipolytic enzyme family.

The protein localises to the secreted. In Arabidopsis thaliana (Mouse-ear cress), this protein is GDSL esterase/lipase At2g24560.